We begin with the raw amino-acid sequence, 216 residues long: DNA repair and recombination protein RadB (216 aa).

This sequence belongs to the eukaryotic RecA-like protein family. RadB subfamily.

In terms of biological role, involved in DNA repair and in homologous recombination. May regulate the cleavage reactions of the branch-structured DNA. Has a very weak ATPase activity that is not stimulated by DNA. Binds DNA but does not promote DNA strands exchange. This is DNA repair and recombination protein RadB from Methanococcus maripaludis (strain C5 / ATCC BAA-1333).